We begin with the raw amino-acid sequence, 624 residues long: Atypical kinase COQ8B, mitochondrial (624 aa).

The segment at 90–117 (EMPPDFSSKDGRGETSETPVGAATGTIK) is disordered. A helical membrane pass occupies residues 189–205 (LANFGGLAVGLGIGAIA). Positions 249 to 252 (KIGQ) match the KxGQ motif motif. In terms of domain architecture, Protein kinase spans 285-517 (MHKVLEEELG…ATVLKKSKDL (233 aa)). Residues 310–313 (AAAS) carry the AAAS motif motif. ATP contacts are provided by residues serine 313, lysine 331, and 418–421 (MELV). Aspartate 461 acts as the Proton acceptor in catalysis. Positions 466 and 480 each coordinate ATP.

This sequence belongs to the protein kinase superfamily. ADCK protein kinase family. Homodimer; homodimerizes via its transmembrane region. Interacts with the multi-subunit COQ enzyme complex.

It is found in the mitochondrion membrane. The protein resides in the cytoplasm. The protein localises to the cytosol. Its subcellular location is the cell membrane. It functions in the pathway cofactor biosynthesis; ubiquinone biosynthesis. Atypical kinase involved in the biosynthesis of coenzyme Q, also named ubiquinone, an essential lipid-soluble electron transporter for aerobic cellular respiration. Its substrate specificity is still unclear: may act as a protein kinase that mediates phosphorylation of COQ3. According to other reports, acts as a small molecule kinase, possibly a lipid kinase that phosphorylates a prenyl lipid in the ubiquinone biosynthesis pathway, as suggested by its ability to bind coenzyme Q lipid intermediates. However, the small molecule kinase activity was not confirmed by another publication. Required for podocyte migration. This is Atypical kinase COQ8B, mitochondrial from Danio rerio (Zebrafish).